The sequence spans 373 residues: Dual-specificity RNA methyltransferase RlmN (373 aa).

The Proton acceptor role is filled by glutamate 94. Residues 100 to 339 (EADRATLCVS…VIVRKTRGDD (240 aa)) form the Radical SAM core domain. A disulfide bridge connects residues cysteine 107 and cysteine 344. Residues cysteine 114, cysteine 118, and cysteine 121 each coordinate [4Fe-4S] cluster. S-adenosyl-L-methionine is bound by residues 168–169 (GE), serine 200, 222–224 (SLH), and asparagine 301. The active-site S-methylcysteine intermediate is the cysteine 344.

The protein belongs to the radical SAM superfamily. RlmN family. [4Fe-4S] cluster serves as cofactor.

The protein localises to the cytoplasm. It carries out the reaction adenosine(2503) in 23S rRNA + 2 reduced [2Fe-2S]-[ferredoxin] + 2 S-adenosyl-L-methionine = 2-methyladenosine(2503) in 23S rRNA + 5'-deoxyadenosine + L-methionine + 2 oxidized [2Fe-2S]-[ferredoxin] + S-adenosyl-L-homocysteine. The enzyme catalyses adenosine(37) in tRNA + 2 reduced [2Fe-2S]-[ferredoxin] + 2 S-adenosyl-L-methionine = 2-methyladenosine(37) in tRNA + 5'-deoxyadenosine + L-methionine + 2 oxidized [2Fe-2S]-[ferredoxin] + S-adenosyl-L-homocysteine. In terms of biological role, specifically methylates position 2 of adenine 2503 in 23S rRNA and position 2 of adenine 37 in tRNAs. m2A2503 modification seems to play a crucial role in the proofreading step occurring at the peptidyl transferase center and thus would serve to optimize ribosomal fidelity. The protein is Dual-specificity RNA methyltransferase RlmN of Tolumonas auensis (strain DSM 9187 / NBRC 110442 / TA 4).